Here is a 1296-residue protein sequence, read N- to C-terminus: MPFVNKQFNYKDPVNGVDIAYIKIPNAGQMQPVKAFKIHNKIWVIPERDTFTNPEEGDLNPPPEAKQVPVSYYDSTYLSTDNEKDNYLKGVTKLFERIYSTDLGRMLLTSIVRGIPFWGGSTIDTELKVIDTNCINVIQPDGSYRSEELNLVIIGPSADIIQFECKSFGHEVLNLTRNGYGSTQYIRFSPDFTFGFEESLEVDTNPLLGAGKFATDPAVTLAHELIHAGHRLYGIAINPNRVFKVNTNAYYEMSGLEVSFEELRTFGGHDAKFIDSLQENEFRLYYYNKFKDIASTLNKAKSIVGTTASLQYMKNVFKEKYLLSEDTSGKFSVDKLKFDKLYKMLTEIYTEDNFVKFFKVLNRKTYLNFDKAVFKINIVPKVNYTIYDGFNLRNTNLAANFNGQNTEINNMNFTKLKNFTGLFEFYKLLCVRGIITSKTKSLDKGYNKALNDLCIKVNNWDLFFSPSEDNFTNDLNKGEEITSDTNIEAAEENISLDLIQQYYLTFNFDNEPENISIENLSSDIIGQLELMPNIERFPNGKKYELDKYTMFHYLRAQEFEHGKSRIALTNSVNEALLNPSRVYTFFSSDYVKKVNKATEAAMFLGWVEQLVYDFTDETSEVSTTDKIADITIIIPYIGPALNIGNMLYKDDFVGALIFSGAVILLEFIPEIAIPVLGTFALVSYIANKVLTVQTIDNALSKRNEKWDEVYKYIVTNWLAKVNTQIDLIRKKMKEALENQAEATKAIINYQYNQYTEEEKNNINFNIDDLSSKLNESINKAMININKFLNQCSVSYLMNSMIPYGVKRLEDFDASLKDALLKYIYDNRGTLIGQVDRLKDKVNNTLSTDIPFQLSKYVDNQRLLSTFTEYIKNIINTSILNLRYESNHLIDLSRYASKINIGSKVNFDPIDKNQIQLFNLESSKIEVILKNAIVYNSMYENFSTSFWIRIPKYFNSISLNNEYTIINCMENNSGWKVSLNYGEIIWTLQDTQEIKQRVVFKYSQMINISDYINRWIFVTITNNRLNNSKIYINGRLIDQKPISNLGNIHASNNIMFKLDGCRDTHRYIWIKYFNLFDKELNEKEIKDLYDNQSNSGILKDFWGDYLQYDKPYYMLNLYDPNKYVDVNNVGIRGYMYLKGPRGSVMTTNIYLNSSLYRGTKFIIKKYASGNKDNIVRNNDRVYINVVVKNKEYRLATNASQAGVEKILSALEIPDVGNLSQVVVMKSKNDQGITNKCKMNLQDNNGNDIGFIGFHQFNNIAKLVASNWYNRQIERSSRTLGCSWEFIPVDDGWGERPL.

His223 is a Zn(2+) binding site. Residue Glu224 is part of the active site. His227 and Glu262 together coordinate Zn(2+). Cys430 and Cys454 are disulfide-bonded. Residues 449-872 (ALNDLCIKVN…LSTFTEYIKN (424 aa)) are translocation domain (TD). The tract at residues 492 to 545 (ENISLDLIQQYYLTFNFDNEPENISIENLSSDIIGQLELMPNIERFPNGKKYEL) is belt. 2 helical membrane passes run 627 to 647 (IADI…GNML) and 656 to 676 (LIFS…IPVL). The N-terminus of receptor binding domain (N-RBD) stretch occupies residues 873–1092 (IINTSILNLR…EIKDLYDNQS (220 aa)). Positions 1093 to 1296 (NSGILKDFWG…VDDGWGERPL (204 aa)) are C-terminus of receptor binding domain (C-RBD). Cys1235 and Cys1280 are joined by a disulfide. Residues 1264–1267 (SNWY) carry the Host ganglioside-binding motif motif.

It belongs to the peptidase M27 family. In terms of assembly, heterodimer; disulfide-linked heterodimer of a light chain (LC) and a heavy chain (HC). Interacts with host synaptic vesicle glycoproteins SV2A, SV2B and SV2C which serve as coreceptors. Glycosylation of 'Asn-559' in SV2C probably contributes a 12-fold increase in affinity to this interaction. Depolarization of target tissue with high levels of K(+) leads to greater levels of receptor exposure. Zn(2+) is required as a cofactor. In terms of processing, in a bacterial culture the precursor chain is initally cleaved on the amino side of Gly-445 and is processed more slowly between Lys-448 and Ala-449 to give the final mature heavy chain sequence.

The protein resides in the secreted. It is found in the host cytoplasm. The protein localises to the host cytosol. Its subcellular location is the host synapse. It localises to the host presynaptic cell membrane. The protein resides in the host cytoplasmic vesicle. It is found in the host secretory vesicle. The protein localises to the host synaptic vesicle membrane. It carries out the reaction Limited hydrolysis of proteins of the neuroexocytosis apparatus, synaptobrevins, SNAP25 or syntaxin. No detected action on small molecule substrates.. Its activity is regulated as follows. SNAP25 proteolysis is inhibited by 1,10-phenanthroline and 2,2'-dipyridyl but not EDTA. Inhibited by hydroxamate compounds with halogenated benzene-containing arms which directly bind the zinc ion. In terms of biological role, botulinum toxin causes flaccid paralysis by inhibiting neurotransmitter (acetylcholine) release from the presynaptic membranes of nerve terminals of the eukaryotic host skeletal and autonomic nervous system, with frequent heart or respiratory failure. Precursor of botulinum neurotoxin A which has 2 coreceptors; complex polysialylated gangliosides found on neural tissue and specific membrane-anchored proteins of synaptic vesicles. Receptor proteins are exposed on host presynaptic cell membrane during neurotransmitter release, when the toxin heavy chain (HC) binds to them. Upon synaptic vesicle recycling the toxin is taken up via the endocytic pathway. When the pH of the toxin-containing endosome drops a structural rearrangement occurs so that the N-terminus of the HC forms pores that allows the light chain (LC) to translocate into the cytosol. Once in the cytosol the disulfide bond linking the 2 subunits is reduced and LC cleaves its target protein on synaptic vesicles, preventing their fusion with the cytoplasmic membrane and thus neurotransmitter release. Functionally, has proteolytic activity. In vitro the whole toxin is reduced to release LC. After translocation into the eukaryotic host cytosol, LC hydrolyzes the 197-Gln-|-Arg-198 bond in SNAP25, blocking neurotransmitter release. Its function is as follows. Responsible for host epithelial cell transcytosis, host nerve cell targeting and translocation of light chain (LC) into host cytosol. Composed of 3 subdomains; the translocation domain (TD), and N-terminus and C-terminus of the receptor-binding domain (RBD). The RBD is responsible for the adherence of the toxin to the cell surface. It simultaneously recognizes 2 coreceptors; polysialated gangliosides and synaptic vesicle glycoproteins SV2A, SV2B and SV2C in close proximity on host synaptic vesicles. The RBD specifically recognizes the N-linked glycan on 'Asn-559' of SV2A, SV2B and SV2C. Isolated HC binds to host synaptosomes, significantly decreases uptake and toxicity of whole BoNT/A. Binds ganglioside GD1a in vitro. The N-terminus of the TD wraps an extended belt around the perimeter of the LC, protecting Zn(2+) in the active site; it may also prevent premature LC dissociation from the translocation channel and to protect toxin prior to translocation. The TD inserts into synaptic vesicle membrane to allow translocation into the host cytosol. The protein is Botulinum neurotoxin type A of Clostridium botulinum (strain Hall / ATCC 3502 / NCTC 13319 / Type A).